Here is a 134-residue protein sequence, read N- to C-terminus: Small ribosomal subunit protein uS8 (134 aa).

It belongs to the universal ribosomal protein uS8 family. Part of the 30S ribosomal subunit. Contacts proteins S5 and S12.

One of the primary rRNA binding proteins, it binds directly to 16S rRNA central domain where it helps coordinate assembly of the platform of the 30S subunit. This chain is Small ribosomal subunit protein uS8, found in Nitratiruptor sp. (strain SB155-2).